A 237-amino-acid polypeptide reads, in one-letter code: tRNA (guanine-N(7)-)-methyltransferase (237 aa).

The tract at residues 1 to 24 is disordered; it reads MTAHKPGDPTTLNRLYGRSKGKPL. S-adenosyl-L-methionine-binding residues include Glu62, Glu87, Asp119, and Asp141. The active site involves Asp141. Substrate is bound by residues Lys145, Asp177, and 216 to 219; that span reads TRYE.

The protein belongs to the class I-like SAM-binding methyltransferase superfamily. TrmB family.

The catalysed reaction is guanosine(46) in tRNA + S-adenosyl-L-methionine = N(7)-methylguanosine(46) in tRNA + S-adenosyl-L-homocysteine. It participates in tRNA modification; N(7)-methylguanine-tRNA biosynthesis. In terms of biological role, catalyzes the formation of N(7)-methylguanine at position 46 (m7G46) in tRNA. This Sphingopyxis alaskensis (strain DSM 13593 / LMG 18877 / RB2256) (Sphingomonas alaskensis) protein is tRNA (guanine-N(7)-)-methyltransferase.